A 180-amino-acid polypeptide reads, in one-letter code: Protein C2-DOMAIN ABA-RELATED 10 (180 aa).

Residues 1–105 (MDQKPLGLLT…EALKMGMELL (105 aa)) enclose the C2 domain. Ca(2+) is bound by residues Arg22, Asp23, Asp28, Asp74, Trp75, Asp76, and Asp82.

The protein belongs to the plant CAR protein family. In terms of assembly, binds to PYR/PYL/RCAR abscisic acid intracellular receptors in an ABA-independent manner, both at the plasma membrane and in the nucleus.

It is found in the cell membrane. Its subcellular location is the nucleus. Functionally, stimulates the GTPase/ATPase activities of Obg-like ATPases. Mediates the transient calcium-dependent interaction of PYR/PYL/RCAR abscisic acid (ABA) receptors with the plasma membrane and thus regulates ABA sensitivity. This is Protein C2-DOMAIN ABA-RELATED 10 from Arabidopsis thaliana (Mouse-ear cress).